The chain runs to 311 residues: NAD kinase (311 aa).

Asp67 serves as the catalytic Proton acceptor. NAD(+) is bound by residues 67 to 68, Arg72, 140 to 141, Arg151, Asp170, 181 to 186, and Gln240; these read DG, ND, and TAYSLS. Basic and acidic residues predominate over residues 278–287; it reads LKEGGSRQDD. Positions 278 to 311 are disordered; sequence LKEGGSRQDDENPAATVNPETDSKYPHSHPGSTG.

Belongs to the NAD kinase family. A divalent metal cation serves as cofactor.

It localises to the cytoplasm. The enzyme catalyses NAD(+) + ATP = ADP + NADP(+) + H(+). Its function is as follows. Involved in the regulation of the intracellular balance of NAD and NADP, and is a key enzyme in the biosynthesis of NADP. Catalyzes specifically the phosphorylation on 2'-hydroxyl of the adenosine moiety of NAD to yield NADP. The protein is NAD kinase of Moorella thermoacetica (strain ATCC 39073 / JCM 9320).